Reading from the N-terminus, the 165-residue chain is Xanthine-guanine phosphoribosyltransferase (165 aa).

5-phospho-alpha-D-ribose 1-diphosphate contacts are provided by residues 41–42 (RG) and 98–106 (DDLTDTGKT). Position 99 (D99) interacts with Mg(2+). D102 and I145 together coordinate guanine. The xanthine site is built by D102 and I145. GMP-binding positions include 102-106 (DTGKT) and 144-145 (WI).

This sequence belongs to the purine/pyrimidine phosphoribosyltransferase family. XGPT subfamily. In terms of assembly, homotetramer. Mg(2+) is required as a cofactor.

Its subcellular location is the cell inner membrane. It catalyses the reaction GMP + diphosphate = guanine + 5-phospho-alpha-D-ribose 1-diphosphate. The enzyme catalyses XMP + diphosphate = xanthine + 5-phospho-alpha-D-ribose 1-diphosphate. It carries out the reaction IMP + diphosphate = hypoxanthine + 5-phospho-alpha-D-ribose 1-diphosphate. It functions in the pathway purine metabolism; GMP biosynthesis via salvage pathway; GMP from guanine: step 1/1. Its pathway is purine metabolism; XMP biosynthesis via salvage pathway; XMP from xanthine: step 1/1. Its function is as follows. Purine salvage pathway enzyme that catalyzes the transfer of the ribosyl-5-phosphate group from 5-phospho-alpha-D-ribose 1-diphosphate (PRPP) to the N9 position of the 6-oxopurines guanine and xanthine to form the corresponding ribonucleotides GMP (guanosine 5'-monophosphate) and XMP (xanthosine 5'-monophosphate), with the release of PPi. To a lesser extent, also acts on hypoxanthine. The polypeptide is Xanthine-guanine phosphoribosyltransferase (Rhizobium meliloti (strain 1021) (Ensifer meliloti)).